A 248-amino-acid chain; its full sequence is Aspartate/glutamate leucyltransferase (248 aa).

It belongs to the R-transferase family. Bpt subfamily.

The protein resides in the cytoplasm. It carries out the reaction N-terminal L-glutamyl-[protein] + L-leucyl-tRNA(Leu) = N-terminal L-leucyl-L-glutamyl-[protein] + tRNA(Leu) + H(+). The enzyme catalyses N-terminal L-aspartyl-[protein] + L-leucyl-tRNA(Leu) = N-terminal L-leucyl-L-aspartyl-[protein] + tRNA(Leu) + H(+). In terms of biological role, functions in the N-end rule pathway of protein degradation where it conjugates Leu from its aminoacyl-tRNA to the N-termini of proteins containing an N-terminal aspartate or glutamate. The polypeptide is Aspartate/glutamate leucyltransferase (Methylobacterium sp. (strain 4-46)).